The primary structure comprises 843 residues: Probable inorganic carbon transporter subunit DabA 2 (843 aa).

4 residues coordinate Zn(2+): Cys352, Asp354, His536, and Cys551.

This sequence belongs to the inorganic carbon transporter (TC 9.A.2) DabA family. Forms a complex with DabB. Requires Zn(2+) as cofactor.

The protein resides in the cell inner membrane. Part of an energy-coupled inorganic carbon pump. The protein is Probable inorganic carbon transporter subunit DabA 2 of Bradyrhizobium sp. (strain BTAi1 / ATCC BAA-1182).